A 387-amino-acid chain; its full sequence is Ferrochelatase (387 aa).

2 residues coordinate Fe cation: His-196 and Glu-277.

It belongs to the ferrochelatase family.

It localises to the cytoplasm. The enzyme catalyses heme b + 2 H(+) = protoporphyrin IX + Fe(2+). It participates in porphyrin-containing compound metabolism; protoheme biosynthesis; protoheme from protoporphyrin-IX: step 1/1. Functionally, catalyzes the ferrous insertion into protoporphyrin IX. In Synechococcus elongatus (strain ATCC 33912 / PCC 7942 / FACHB-805) (Anacystis nidulans R2), this protein is Ferrochelatase.